A 639-amino-acid polypeptide reads, in one-letter code: Lipoteichoic acid synthase 1 (639 aa).

At Met1 to Lys3 the chain is on the cytoplasmic side. The helical transmembrane segment at Leu4–Tyr24 threads the bilayer. Over Leu25–Glu41 the chain is Extracellular. Residues Ile42–Ala62 form a helical membrane-spanning segment. Residues Lys63–Ser67 lie on the Cytoplasmic side of the membrane. The chain crosses the membrane as a helical span at residues Ala68–Phe88. Topologically, residues Tyr89–Ser116 are extracellular. The chain crosses the membrane as a helical span at residues Ile117–Ile137. Over Trp138–Arg150 the chain is Cytoplasmic. The chain crosses the membrane as a helical span at residues Phe151 to Glu171. Residues Lys172–Lys639 lie on the Extracellular side of the membrane. Residues Glu252 and Thr297 each contribute to the Mn(2+) site. Residue Thr297 is part of the active site. Position 413 (His413) interacts with substrate. 2 residues coordinate Mn(2+): Asp472 and His473.

It belongs to the LTA synthase family. In terms of processing, proteolytically cleaved by the type I signal peptidases SipT and SipV.

It is found in the cell membrane. The protein localises to the secreted. Its pathway is cell wall biogenesis; lipoteichoic acid biosynthesis. Its function is as follows. Catalyzes the polymerization of lipoteichoic acid (LTA) polyglycerol phosphate, a reaction that presumably uses phosphatidylglycerol (PG) as substrate. The polypeptide is Lipoteichoic acid synthase 1 (ltaS1) (Bacillus subtilis (strain 168)).